Reading from the N-terminus, the 259-residue chain is Hydroxyacylglutathione hydrolase (259 aa).

Positions 56, 58, 60, 61, 112, 133, and 171 each coordinate Zn(2+).

This sequence belongs to the metallo-beta-lactamase superfamily. Glyoxalase II family. In terms of assembly, monomer. Requires Zn(2+) as cofactor.

It carries out the reaction an S-(2-hydroxyacyl)glutathione + H2O = a 2-hydroxy carboxylate + glutathione + H(+). It functions in the pathway secondary metabolite metabolism; methylglyoxal degradation; (R)-lactate from methylglyoxal: step 2/2. Thiolesterase that catalyzes the hydrolysis of S-D-lactoyl-glutathione to form glutathione and D-lactic acid. The chain is Hydroxyacylglutathione hydrolase from Pseudomonas putida (strain ATCC 47054 / DSM 6125 / CFBP 8728 / NCIMB 11950 / KT2440).